A 338-amino-acid polypeptide reads, in one-letter code: Aspartate carbamoyltransferase catalytic subunit (338 aa).

Carbamoyl phosphate contacts are provided by arginine 72 and threonine 73. Lysine 100 lines the L-aspartate pocket. The carbamoyl phosphate site is built by arginine 122, histidine 152, and glutamine 155. Arginine 186 and arginine 243 together coordinate L-aspartate. Residues glycine 284 and proline 285 each coordinate carbamoyl phosphate.

It belongs to the aspartate/ornithine carbamoyltransferase superfamily. ATCase family. In terms of assembly, heterododecamer (2C3:3R2) of six catalytic PyrB chains organized as two trimers (C3), and six regulatory PyrI chains organized as three dimers (R2).

The enzyme catalyses carbamoyl phosphate + L-aspartate = N-carbamoyl-L-aspartate + phosphate + H(+). It participates in pyrimidine metabolism; UMP biosynthesis via de novo pathway; (S)-dihydroorotate from bicarbonate: step 2/3. Catalyzes the condensation of carbamoyl phosphate and aspartate to form carbamoyl aspartate and inorganic phosphate, the committed step in the de novo pyrimidine nucleotide biosynthesis pathway. The polypeptide is Aspartate carbamoyltransferase catalytic subunit (Acinetobacter baumannii (strain ACICU)).